Consider the following 428-residue polypeptide: Elongation factor 1-alpha (428 aa).

A tr-type G domain is found at 5–217 (KPHVNIVFIG…DQIPEPEKPI (213 aa)). Residues 14–21 (GHVDHGKS) form a G1 region. GTP is bound at residue 14 to 21 (GHVDHGKS). Mg(2+) is bound at residue Ser21. The G2 stretch occupies residues 68 to 72 (GITID). A G3 region spans residues 89–92 (DAPG). Residues 89–93 (DAPGH) and 144–147 (NKMD) each bind GTP. Positions 144-147 (NKMD) are G4. The segment at 181 to 183 (SAW) is G5.

This sequence belongs to the TRAFAC class translation factor GTPase superfamily. Classic translation factor GTPase family. EF-Tu/EF-1A subfamily.

It localises to the cytoplasm. The catalysed reaction is GTP + H2O = GDP + phosphate + H(+). Functionally, GTP hydrolase that promotes the GTP-dependent binding of aminoacyl-tRNA to the A-site of ribosomes during protein biosynthesis. This is Elongation factor 1-alpha from Pyrococcus horikoshii (strain ATCC 700860 / DSM 12428 / JCM 9974 / NBRC 100139 / OT-3).